A 658-amino-acid polypeptide reads, in one-letter code: Probable rhamnogalacturonate lyase B (658 aa).

Residues 1 to 19 (MRFAIPLGAACAWAGVALA) form the signal peptide. Residues N110, N143, N239, N280, N522, N530, N592, and N633 are each glycosylated (N-linked (GlcNAc...) asparagine).

This sequence belongs to the polysaccharide lyase 4 family.

It is found in the secreted. The enzyme catalyses Endotype eliminative cleavage of L-alpha-rhamnopyranosyl-(1-&gt;4)-alpha-D-galactopyranosyluronic acid bonds of rhamnogalacturonan I domains in ramified hairy regions of pectin leaving L-rhamnopyranose at the reducing end and 4-deoxy-4,5-unsaturated D-galactopyranosyluronic acid at the non-reducing end.. Its function is as follows. Pectinolytic enzymes consist of four classes of enzymes: pectin lyase, polygalacturonase, pectin methylesterase and rhamnogalacturonase. Degrades the rhamnogalacturonan I (RG-I) backbone of pectin. This chain is Probable rhamnogalacturonate lyase B (rglB), found in Aspergillus fumigatus (strain CBS 144.89 / FGSC A1163 / CEA10) (Neosartorya fumigata).